The following is a 388-amino-acid chain: Succinate--CoA ligase [ADP-forming] subunit beta (388 aa).

One can recognise an ATP-grasp domain in the interval 9 to 244 (KQLFAEYGLP…PSQDDPREAH (236 aa)). ATP-binding positions include Lys46, 53–55 (GRG), Glu99, Thr102, and Glu107. Mg(2+)-binding residues include Asn199 and Asp213. Residues Asn264 and 321–323 (GIV) contribute to the substrate site.

It belongs to the succinate/malate CoA ligase beta subunit family. As to quaternary structure, heterotetramer of two alpha and two beta subunits. Mg(2+) serves as cofactor.

The enzyme catalyses succinate + ATP + CoA = succinyl-CoA + ADP + phosphate. It carries out the reaction GTP + succinate + CoA = succinyl-CoA + GDP + phosphate. It participates in carbohydrate metabolism; tricarboxylic acid cycle; succinate from succinyl-CoA (ligase route): step 1/1. In terms of biological role, succinyl-CoA synthetase functions in the citric acid cycle (TCA), coupling the hydrolysis of succinyl-CoA to the synthesis of either ATP or GTP and thus represents the only step of substrate-level phosphorylation in the TCA. The beta subunit provides nucleotide specificity of the enzyme and binds the substrate succinate, while the binding sites for coenzyme A and phosphate are found in the alpha subunit. This chain is Succinate--CoA ligase [ADP-forming] subunit beta, found in Pseudomonas putida (strain GB-1).